A 181-amino-acid polypeptide reads, in one-letter code: Large ribosomal subunit protein uL10 (181 aa).

It belongs to the universal ribosomal protein uL10 family. As to quaternary structure, part of the ribosomal stalk of the 50S ribosomal subunit. The N-terminus interacts with L11 and the large rRNA to form the base of the stalk. The C-terminus forms an elongated spine to which L12 dimers bind in a sequential fashion forming a multimeric L10(L12)X complex.

In terms of biological role, forms part of the ribosomal stalk, playing a central role in the interaction of the ribosome with GTP-bound translation factors. The sequence is that of Large ribosomal subunit protein uL10 from Acidobacterium capsulatum (strain ATCC 51196 / DSM 11244 / BCRC 80197 / JCM 7670 / NBRC 15755 / NCIMB 13165 / 161).